The sequence spans 202 residues: MEHYISLFVRAVFVENMALAFFLGMCTFIAISKKVETAIGLGVAVIVVLGITMPVNNLIYANILKDGALAWAGLPEVDLSFLGLLTFIGVIAALVQILEMTLDKYVPSLYNALGVFLPLITVNCAIMGGSLFMVERDYNLAESTVYGIGAGVSWALAIAALAGIREKLKYSDVPAGLQGLGITFITIGLMSLGFMSFSGVQL.

6 helical membrane-spanning segments follow: residues 11 to 31, 35 to 55, 79 to 99, 114 to 134, 144 to 164, and 180 to 200; these read AVFV…FIAI, VETA…TMPV, LSFL…QILE, GVFL…LFMV, TVYG…LAGI, and LGIT…FSGV.

This sequence belongs to the NqrDE/RnfAE family. Composed of six subunits; NqrA, NqrB, NqrC, NqrD, NqrE and NqrF.

The protein localises to the cell inner membrane. It catalyses the reaction a ubiquinone + n Na(+)(in) + NADH + H(+) = a ubiquinol + n Na(+)(out) + NAD(+). Its function is as follows. NQR complex catalyzes the reduction of ubiquinone-1 to ubiquinol by two successive reactions, coupled with the transport of Na(+) ions from the cytoplasm to the periplasm. NqrA to NqrE are probably involved in the second step, the conversion of ubisemiquinone to ubiquinol. This is Na(+)-translocating NADH-quinone reductase subunit E from Ectopseudomonas mendocina (strain ymp) (Pseudomonas mendocina).